The chain runs to 379 residues: Origin of replication complex subunit 2 (379 aa).

A disordered region spans residues 1-25 (MALRGGHAAAAAGVSSGSEDDDEEA). A compositionally biased stretch (low complexity) spans 8–17 (AAAAAGVSSG).

The protein belongs to the ORC2 family. Component of the origin recognition complex (ORC) composed of at least ORC1, ORC2, ORC3, ORC4, ORC5 and ORC6. ORC is regulated in a cell-cycle and development dependent manner. It is sequentially assembled at the exit from anaphase of mitosis and disassembled as cells enter S phase.

It localises to the nucleus. Essential protein. Component of the origin recognition complex (ORC) that binds origins of replication. DNA-binding is ATP-dependent, however specific DNA sequences that define origins of replication have not been identified so far. ORC is required to assemble the pre-replication complex necessary to initiate DNA replication. This Oryza sativa subsp. indica (Rice) protein is Origin of replication complex subunit 2.